Reading from the N-terminus, the 373-residue chain is MLPWLLVFSALGIQAWGDSSWNKTQAKQVSEGLQYLFENISQLTEKGLPTDVSTTVSRKAWGAEAVGCSIQLTTPVNVLVIHHVPGLECHDQTVCSQRLRELQAHHVHNNSGCDVAYNFLVGDDGRVYEGVGWNIQGVHTQGYNNISLGFAFFGTKKGHSPSPAALSAMENLITYAVQKGHLSSSYVQPLLGKGENCLAPRQKTSLKKACPGVVPRSVWGARETHCPRMTLPAKYGIIIHTAGRTCNISDECRLLVRDIQSFYIDRLKSCDIGYNFLVGQDGAIYEGVGWNVQGSSTPGYDDIALGITFMGTFTGIPPNAAALEAAQDLIQCAMVKGYLTPNYLLVGHSDVARTLSPGQALYNIISTWPHFKH.

Residues 1–17 (MLPWLLVFSALGIQAWG) form the signal peptide. N-linked (GlcNAc...) asparagine glycans are attached at residues Asn22, Asn39, Asn109, Asn145, and Asn247. 2 N-acetylmuramoyl-L-alanine amidase domains span residues 74 to 212 (TPVN…ACPG) and 235 to 358 (YGII…LSPG). Disulfide bonds link Cys210–Cys332, Cys226–Cys270, and Cys246–Cys252. Residues Tyr263 and Tyr274 each coordinate peptidoglycan. Interaction with murein stretches follow at residues 293-302 (QGSSTPGYDD) and 353-354 (RT).

It belongs to the N-acetylmuramoyl-L-alanine amidase 2 family. In terms of assembly, homodimer; disulfide-linked. Heterodimer with PGLYRP3; disulfide-linked. N-glycosylated. In terms of tissue distribution, detected in skin epidermis, eccrine sweat glands and ducts, mucous cells in the submandibular salivary gland, mucous cells in the throat, ciliary body epithelial cells of the eye, small intestine, colon, stomach and in mature epithelial cells of the tongue (at protein level). High expression in skin and esophagus. Expressed also to a much lesser extent in the tonsils and thymus.

Its subcellular location is the secreted. Its function is as follows. Pattern receptor that binds to murein peptidoglycans (PGN) of Gram-positive bacteria. Has bactericidal activity towards Gram-positive bacteria. May kill Gram-positive bacteria by interfering with peptidoglycan biosynthesis. Also binds to Gram-negative bacteria, and has bacteriostatic activity towards Gram-negative bacteria. Plays a role in innate immunity. The polypeptide is Peptidoglycan recognition protein 4 (PGLYRP4) (Homo sapiens (Human)).